We begin with the raw amino-acid sequence, 251 residues long: Diphthine synthase (251 aa).

Residues Leu9, Asp84, Val87, 112–113, Leu160, Ala194, and His219 contribute to the S-adenosyl-L-methionine site; that span reads SI.

Belongs to the diphthine synthase family. As to quaternary structure, homodimer.

It carries out the reaction 2-[(3S)-amino-3-carboxypropyl]-L-histidyl-[translation elongation factor 2] + 3 S-adenosyl-L-methionine = diphthine-[translation elongation factor 2] + 3 S-adenosyl-L-homocysteine + 3 H(+). The protein operates within protein modification; peptidyl-diphthamide biosynthesis. Its function is as follows. S-adenosyl-L-methionine-dependent methyltransferase that catalyzes the trimethylation of the amino group of the modified target histidine residue in translation elongation factor 2 (EF-2), to form an intermediate called diphthine. The three successive methylation reactions represent the second step of diphthamide biosynthesis. In Archaeoglobus fulgidus (strain ATCC 49558 / DSM 4304 / JCM 9628 / NBRC 100126 / VC-16), this protein is Diphthine synthase.